Here is a 249-residue protein sequence, read N- to C-terminus: 3alpha-hydroxy bile acid-CoA-ester 3-dehydrogenase 1/3 (249 aa).

Residues 15 to 18, Glu38, Glu42, and Asn92 each bind NAD(+); that span reads TRGI. Ser144 is a substrate binding site. Residues Tyr157 and Lys161 each act as proton donor/acceptor in the active site. NAD(+) contacts are provided by residues Lys161 and 190–192; that span reads VDT.

The protein belongs to the short-chain dehydrogenases/reductases (SDR) family. Homotetramer.

It catalyses the reaction a 3alpha-hydroxy bile acid CoA + NAD(+) = a 3-oxo bile acid CoA + NADH + H(+). It carries out the reaction choloyl-CoA + NAD(+) = 7alpha,12alpha-dihydroxy-3-oxochol-24-oyl-CoA + NADH + H(+). The catalysed reaction is chenodeoxycholoyl-CoA + NAD(+) = 7alpha-hydroxy-3-oxochol-24-oyl-CoA + NADH + H(+). The enzyme catalyses deoxycholoyl-CoA + NAD(+) = 12alpha-hydroxy-3-oxocholan-24-oyl-CoA + NADH + H(+). It catalyses the reaction lithocholoyl-CoA + NAD(+) = 3-oxocholan-24-oyl-CoA + NADH + H(+). It participates in lipid metabolism; bile acid biosynthesis. Functionally, involved in the multi-step bile acid 7alpha-dehydroxylation pathway that transforms primary bile acids to secondary bile acids in the human gut. Catalyzes the oxidation of C3-hydroxyl group of CoA conjugated bile acids generating a C3-oxo bile acid intermediate. Can use choloyl-CoA, chenodeoxycholoyl-CoA, deoxycholoyl-CoA, and lithocholoyl-CoA as substrates with similar efficiency. Highly prefers NAD over NADP as cosubstrate. Also catalyzes the reverse reactions; in vitro, the preferred direction of reaction depends on the pH. Has very little activity with unconjugated (non-CoA) bile acid substrates. This is 3alpha-hydroxy bile acid-CoA-ester 3-dehydrogenase 1/3 (baiA1) from Clostridium scindens (strain JCM 10418 / VPI 12708).